We begin with the raw amino-acid sequence, 314 residues long: Oxalate oxidoreductase subunit beta (314 aa).

C24, C27, C52, and C225 together coordinate [4Fe-4S] cluster.

As to quaternary structure, dimer of heterotrimer of one alpha, one beta and one delta subunit. It depends on [4Fe-4S] cluster as a cofactor.

It catalyses the reaction oxidized 2[4Fe-4S]-[ferredoxin] + oxalate = reduced 2[4Fe-4S]-[ferredoxin] + 2 CO2. In terms of biological role, catalyzes the anaerobic oxidation of oxalate using a broad range of electron acceptors, including ferredoxin and the nickel-dependent carbon monoxide dehydrogenase. Does not require coenzyme A as cosubstrate. Enables anaerobic growth on oxalate which is used as energy source by the bacteria. The sequence is that of Oxalate oxidoreductase subunit beta from Moorella thermoacetica (strain ATCC 39073 / JCM 9320).